Reading from the N-terminus, the 557-residue chain is Dihydroxy-acid dehydratase (557 aa).

Cys47 lines the [2Fe-2S] cluster pocket. Asp79 contacts Mg(2+). Residue Cys120 participates in [2Fe-2S] cluster binding. Asp121 and Lys122 together coordinate Mg(2+). The residue at position 122 (Lys122) is an N6-carboxylysine. [2Fe-2S] cluster is bound at residue Cys192. Glu444 provides a ligand contact to Mg(2+). The active-site Proton acceptor is the Ser470.

The protein belongs to the IlvD/Edd family. As to quaternary structure, homodimer. Requires [2Fe-2S] cluster as cofactor. Mg(2+) is required as a cofactor.

It carries out the reaction (2R)-2,3-dihydroxy-3-methylbutanoate = 3-methyl-2-oxobutanoate + H2O. The enzyme catalyses (2R,3R)-2,3-dihydroxy-3-methylpentanoate = (S)-3-methyl-2-oxopentanoate + H2O. It participates in amino-acid biosynthesis; L-isoleucine biosynthesis; L-isoleucine from 2-oxobutanoate: step 3/4. It functions in the pathway amino-acid biosynthesis; L-valine biosynthesis; L-valine from pyruvate: step 3/4. Functions in the biosynthesis of branched-chain amino acids. Catalyzes the dehydration of (2R,3R)-2,3-dihydroxy-3-methylpentanoate (2,3-dihydroxy-3-methylvalerate) into 2-oxo-3-methylpentanoate (2-oxo-3-methylvalerate) and of (2R)-2,3-dihydroxy-3-methylbutanoate (2,3-dihydroxyisovalerate) into 2-oxo-3-methylbutanoate (2-oxoisovalerate), the penultimate precursor to L-isoleucine and L-valine, respectively. The protein is Dihydroxy-acid dehydratase of Synechococcus sp. (strain CC9605).